The sequence spans 294 residues: Large ribosomal subunit protein uL2 (294 aa).

2 disordered regions span residues 1–37 (MGIR…RPEK) and 228–294 (GSVM…RAAQ). The segment covering 23-37 (ELSRDENGKRPRPEK) has biased composition (basic and acidic residues). Residues 264–285 (KTRKRNKPSNKFIVRGRRRGGR) are compositionally biased toward basic residues.

Belongs to the universal ribosomal protein uL2 family. As to quaternary structure, part of the 50S ribosomal subunit. Forms a bridge to the 30S subunit in the 70S ribosome.

One of the primary rRNA binding proteins. Required for association of the 30S and 50S subunits to form the 70S ribosome, for tRNA binding and peptide bond formation. It has been suggested to have peptidyltransferase activity; this is somewhat controversial. Makes several contacts with the 16S rRNA in the 70S ribosome. The polypeptide is Large ribosomal subunit protein uL2 (Synechococcus sp. (strain JA-2-3B'a(2-13)) (Cyanobacteria bacterium Yellowstone B-Prime)).